The following is a 78-amino-acid chain: MVKLRPKQCGRKQRTYRIVAIESQSRQEGKVIKEVEFYNPRREETQLDILAITTLCGSGVKLTETVCNIFRRATFKIT.

The protein belongs to the bacterial ribosomal protein bS16 family.

It localises to the plastid. The protein resides in the chloroplast. The chain is Small ribosomal subunit protein bS16c from Adiantum capillus-veneris (Maidenhair fern).